Reading from the N-terminus, the 266-residue chain is L-aspartate dehydrogenase (266 aa).

Residues Ala-123 and Asn-189 each coordinate NAD(+). His-219 is an active-site residue.

Belongs to the L-aspartate dehydrogenase family.

The enzyme catalyses L-aspartate + NADP(+) + H2O = oxaloacetate + NH4(+) + NADPH + H(+). The catalysed reaction is L-aspartate + NAD(+) + H2O = oxaloacetate + NH4(+) + NADH + H(+). It functions in the pathway cofactor biosynthesis; NAD(+) biosynthesis; iminoaspartate from L-aspartate (dehydrogenase route): step 1/1. In terms of biological role, specifically catalyzes the NAD or NADP-dependent dehydrogenation of L-aspartate to iminoaspartate. This chain is L-aspartate dehydrogenase, found in Cupriavidus taiwanensis (strain DSM 17343 / BCRC 17206 / CCUG 44338 / CIP 107171 / LMG 19424 / R1) (Ralstonia taiwanensis (strain LMG 19424)).